The sequence spans 561 residues: BTB/POZ domain-containing protein At2g46260 (561 aa).

Disordered stretches follow at residues 1 to 31 (MRGSNNTDLFDPKTEMDSNFSRHGSSSEGDF) and 100 to 119 (LTDNNQPDMDDAPGGDNLDD). Residues 17–28 (DSNFSRHGSSSE) are compositionally biased toward polar residues. Residues 107–119 (DMDDAPGGDNLDD) show a composition bias toward acidic residues. The BTB domain maps to 143-212 (IDCSTVVRVK…MYSNSLSVTT (70 aa)). Residues 266-358 (QPLTDAAKQF…YMTCRKLKKV (93 aa)) form the BACK domain.

Its pathway is protein modification; protein ubiquitination. Its function is as follows. May act as a substrate-specific adapter of an E3 ubiquitin-protein ligase complex (CUL3-RBX1-BTB) which mediates the ubiquitination and subsequent proteasomal degradation of target proteins. This Arabidopsis thaliana (Mouse-ear cress) protein is BTB/POZ domain-containing protein At2g46260.